A 195-amino-acid polypeptide reads, in one-letter code: Ciliary neurotrophic factor (195 aa).

This sequence belongs to the CNTF family. Nervous system.

The protein resides in the cytoplasm. Functionally, CNTF is a survival factor for various neuronal cell types. Seems to prevent the degeneration of motor axons after axotomy. In Gallus gallus (Chicken), this protein is Ciliary neurotrophic factor (CNTF).